A 78-amino-acid polypeptide reads, in one-letter code: Putative defensin-like protein 133 (78 aa).

The N-terminal stretch at 1-24 (MKRSFLLLLTILTIFIILGQGVMG) is a signal peptide. Disulfide bonds link cysteine 34–cysteine 75, cysteine 44–cysteine 68, cysteine 49–cysteine 72, and cysteine 53–cysteine 74.

The protein belongs to the DEFL family.

The protein resides in the secreted. This Arabidopsis thaliana (Mouse-ear cress) protein is Putative defensin-like protein 133 (LCR33).